The chain runs to 389 residues: Type II methyltransferase M2.BsuMI (389 aa).

One can recognise an SAM-dependent MTase C5-type domain in the interval 1–299 (MKVVSLFSGI…ENLSQPKGSI (299 aa)). Cys69 is an active-site residue.

It belongs to the class I-like SAM-binding methyltransferase superfamily. C5-methyltransferase family. In terms of assembly, monomer. May form a complex with YdiP, also seems to be active alone.

The catalysed reaction is a 2'-deoxycytidine in DNA + S-adenosyl-L-methionine = a 5-methyl-2'-deoxycytidine in DNA + S-adenosyl-L-homocysteine + H(+). Somewhat inhibited by MgCl(2) and spermidine, strongly inhibited by MnCl(2). In terms of biological role, a methylase, recognizes the double-stranded sequence 5'-YTCGAR-3', methylates C-3 on both strands, and protects the DNA from cleavage by the BsuMI endonuclease. This is Type II methyltransferase M2.BsuMI (ydiP) from Bacillus subtilis (strain 168).